The chain runs to 349 residues: MPAEVAAGLPPLPPNHFYFYPPDPLLEGDGAITAIEDSDPFDQYVYRLRRVLYQGRTRWQNVLIADTYNYDRVLMLDGAIQSAESDESLYHELLVQPAMLAHDEPRDVLIIGGGEGATLREVLSHASVRRAVMVDLDRELVELCREHLFQWHQGAFDDPRCELLAEDGRAYLERDPSLYDVVIIDVVDMLDNGPAQALYTRQFYELLHSRLRPGGVVAVQGLEFSHSDDKPHAALARTLRSVFSQVHSYRATVPSFLSSWGFLLASDWLDTNHWQAEDIDRRIERKLGPLWLDHLDGDYLKACFVMDRETRFLLAQPGPVLEDGVPFVAPPDIEEIEFGPAQLPALART.

In terms of domain architecture, PABS spans 29-267 (DGAITAIEDS…SSWGFLLASD (239 aa)). Residue glutamine 60 coordinates S-methyl-5'-thioadenosine. Spermidine contacts are provided by histidine 91 and glutamate 115. S-methyl-5'-thioadenosine contacts are provided by residues aspartate 135 and 167–168 (DG). Aspartate 185 functions as the Proton acceptor in the catalytic mechanism. Position 194 (proline 194) interacts with S-methyl-5'-thioadenosine.

Belongs to the spermidine/spermine synthase family. In terms of assembly, homodimer or homotetramer.

It is found in the cytoplasm. The enzyme catalyses S-adenosyl 3-(methylsulfanyl)propylamine + putrescine = S-methyl-5'-thioadenosine + spermidine + H(+). The protein operates within amine and polyamine biosynthesis; spermidine biosynthesis; spermidine from putrescine: step 1/1. Functionally, catalyzes the irreversible transfer of a propylamine group from the amino donor S-adenosylmethioninamine (decarboxy-AdoMet) to putrescine (1,4-diaminobutane) to yield spermidine. The chain is Polyamine aminopropyltransferase 2 from Pseudomonas aeruginosa (strain ATCC 15692 / DSM 22644 / CIP 104116 / JCM 14847 / LMG 12228 / 1C / PRS 101 / PAO1).